Consider the following 227-residue polypeptide: DNA repair protein RecO (227 aa).

The protein belongs to the RecO family.

Its function is as follows. Involved in DNA repair and RecF pathway recombination. This chain is DNA repair protein RecO, found in Pseudomonas putida (strain W619).